The sequence spans 55 residues: MKIIVVLAVLMLVSAQVCLVSAAEMGHSSDNELSSRDLVKRFFLPPCAYKGTCNH.

An N-terminal signal peptide occupies residues 1–15; it reads MKIIVVLAVLMLVSA. Positions 16–41 are excised as a propeptide; it reads QVCLVSAAEMGHSSDNELSSRDLVKR. The cysteines at positions 47 and 53 are disulfide-linked. A propeptide spanning residues 54 to 55 is cleaved from the precursor; it reads NH.

As to expression, expressed by the skin glands.

It is found in the secreted. In Crinia riparia (Streambank froglet), this protein is Riparin-1.4.